Here is a 241-residue protein sequence, read N- to C-terminus: Uracil-DNA glycosylase (241 aa).

The active-site Proton acceptor is the aspartate 73.

It belongs to the uracil-DNA glycosylase (UDG) superfamily. UNG family.

Its subcellular location is the cytoplasm. The enzyme catalyses Hydrolyzes single-stranded DNA or mismatched double-stranded DNA and polynucleotides, releasing free uracil.. Functionally, excises uracil residues from the DNA which can arise as a result of misincorporation of dUMP residues by DNA polymerase or due to deamination of cytosine. This is Uracil-DNA glycosylase from Agrobacterium fabrum (strain C58 / ATCC 33970) (Agrobacterium tumefaciens (strain C58)).